Reading from the N-terminus, the 361-residue chain is Peptide chain release factor 1 (361 aa).

Glutamine 235 bears the N5-methylglutamine mark. Residues glutamine 287–threonine 309 form a disordered region.

This sequence belongs to the prokaryotic/mitochondrial release factor family. Post-translationally, methylated by PrmC. Methylation increases the termination efficiency of RF1.

It localises to the cytoplasm. In terms of biological role, peptide chain release factor 1 directs the termination of translation in response to the peptide chain termination codons UAG and UAA. This Chlamydia caviae (strain ATCC VR-813 / DSM 19441 / 03DC25 / GPIC) (Chlamydophila caviae) protein is Peptide chain release factor 1.